Here is a 465-residue protein sequence, read N- to C-terminus: Glutamate--tRNA ligase (465 aa).

A 'HIGH' region motif is present at residues 8–18 (PSPTGYLHIGG). The 'KMSKS' region signature appears at 236 to 240 (RLSKR). Residue Lys-239 participates in ATP binding.

Belongs to the class-I aminoacyl-tRNA synthetase family. Glutamate--tRNA ligase type 1 subfamily. As to quaternary structure, monomer.

It localises to the cytoplasm. It carries out the reaction tRNA(Glu) + L-glutamate + ATP = L-glutamyl-tRNA(Glu) + AMP + diphosphate. In terms of biological role, catalyzes the attachment of glutamate to tRNA(Glu) in a two-step reaction: glutamate is first activated by ATP to form Glu-AMP and then transferred to the acceptor end of tRNA(Glu). This Nitrosospira multiformis (strain ATCC 25196 / NCIMB 11849 / C 71) protein is Glutamate--tRNA ligase.